The primary structure comprises 465 residues: Ribulose bisphosphate carboxylase large chain (465 aa).

N6,N6,N6-trimethyllysine is present on K4. 2 residues coordinate substrate: N113 and T163. The Proton acceptor role is filled by K165. K167 is a binding site for substrate. Residues K191, D193, and E194 each coordinate Mg(2+). Residue K191 is modified to N6-carboxylysine. H284 (proton acceptor) is an active-site residue. Positions 285, 317, and 369 each coordinate substrate.

This sequence belongs to the RuBisCO large chain family. Type I subfamily. In terms of assembly, heterohexadecamer of 8 large chains and 8 small chains; disulfide-linked. The disulfide link is formed within the large subunit homodimers. Mg(2+) is required as a cofactor. Post-translationally, the disulfide bond which can form in the large chain dimeric partners within the hexadecamer appears to be associated with oxidative stress and protein turnover.

Its subcellular location is the plastid. It is found in the chloroplast. The catalysed reaction is 2 (2R)-3-phosphoglycerate + 2 H(+) = D-ribulose 1,5-bisphosphate + CO2 + H2O. It catalyses the reaction D-ribulose 1,5-bisphosphate + O2 = 2-phosphoglycolate + (2R)-3-phosphoglycerate + 2 H(+). Functionally, ruBisCO catalyzes two reactions: the carboxylation of D-ribulose 1,5-bisphosphate, the primary event in carbon dioxide fixation, as well as the oxidative fragmentation of the pentose substrate in the photorespiration process. Both reactions occur simultaneously and in competition at the same active site. In Clitoria ternatea (Butterfly pea), this protein is Ribulose bisphosphate carboxylase large chain.